The primary structure comprises 159 residues: Transcription antitermination protein NusB (159 aa).

Positions Met1–Asp20 are disordered.

The protein belongs to the NusB family.

In terms of biological role, involved in transcription antitermination. Required for transcription of ribosomal RNA (rRNA) genes. Binds specifically to the boxA antiterminator sequence of the ribosomal RNA (rrn) operons. This chain is Transcription antitermination protein NusB, found in Stenotrophomonas maltophilia (strain R551-3).